The chain runs to 173 residues: UPF0598 protein F59C6.12 (173 aa).

The protein belongs to the UPF0598 family.

This is UPF0598 protein F59C6.12 from Caenorhabditis elegans.